We begin with the raw amino-acid sequence, 309 residues long: Ribosomal RNA small subunit methyltransferase H (309 aa).

S-adenosyl-L-methionine contacts are provided by residues 33-35 (GGH), Asp53, Phe79, Asp100, and Gln107.

It belongs to the methyltransferase superfamily. RsmH family.

Its subcellular location is the cytoplasm. It carries out the reaction cytidine(1402) in 16S rRNA + S-adenosyl-L-methionine = N(4)-methylcytidine(1402) in 16S rRNA + S-adenosyl-L-homocysteine + H(+). Its function is as follows. Specifically methylates the N4 position of cytidine in position 1402 (C1402) of 16S rRNA. This Clostridium botulinum (strain Kyoto / Type A2) protein is Ribosomal RNA small subunit methyltransferase H.